Reading from the N-terminus, the 215-residue chain is T-complex protein 10A homolog 1 (215 aa).

The interval 1–25 is disordered; that stretch reads MLAGQLEARDPKEGTHPEDPCPGAG. Positions 7-19 are enriched in basic and acidic residues; sequence EARDPKEGTHPED. Positions 69–110 form a coiled coil; sequence ADVHGKLRSHIDALREQNMELREKLRALQLQRWKARKKSAAS. The interval 75–96 is leucine-zipper; the sequence is LRSHIDALREQNMELREKLRAL. The span at 150 to 163 shows a compositional bias: polar residues; the sequence is ATLLGQRSSSNNSA. The segment at 150–215 is disordered; it reads ATLLGQRSSS…TPCAERRGGV (66 aa).

This sequence belongs to the TCP10 family. As to quaternary structure, self-associates (via leucine zipper). Interacts (via leucine zipper) with ZIPK/DAPK3 (via leucine zipper). Interacts with MAD4. In terms of tissue distribution, expressed in liver and testis. Expressed in the seminiferous tubules (at protein level).

It is found in the nucleus. Its function is as follows. May be involved in transcriptional regulation. Has in vitro transcription inhibition activity. Acts as a tumor suppressor in hepatocellular carcinoma (HCC) cells. In Homo sapiens (Human), this protein is T-complex protein 10A homolog 1 (TCP10L).